The sequence spans 255 residues: MNTARLNQGTPLLLNAVSKHYAENIVLNQLDLHIPAGQFVAVVGRSGGGKSTLLRLLAGLETPTAGDVLAGTTPLAEIQDDTRMMFQDARLLPWKSVIDNVGLGLKGQWHDAARQALAAVGLVNRAGEWPAALSGGQKQRVALARALIHRPGLLLLDEPLGALDALTRLEMQDLIVSLWQEHGFTVLLVTHDVSEAVAMADRVLLIEEGKIGLDLTVDIPRPRRLGSVRLAELEAEVLQRVMQRGHSEQPIRRHG.

The 222-residue stretch at 12–233 (LLLNAVSKHY…RLGSVRLAEL (222 aa)) folds into the ABC transporter domain. 44–51 (GRSGGGKS) contacts ATP.

This sequence belongs to the ABC transporter superfamily. Aliphatic sulfonates importer (TC 3.A.1.17.2) family. In terms of assembly, the complex is composed of two ATP-binding proteins (SsuB), two transmembrane proteins (SsuC) and a solute-binding protein (SsuA).

It is found in the cell inner membrane. It carries out the reaction ATP + H2O + aliphatic sulfonate-[sulfonate-binding protein]Side 1 = ADP + phosphate + aliphatic sulfonateSide 2 + [sulfonate-binding protein]Side 1.. In terms of biological role, part of the ABC transporter complex SsuABC involved in aliphatic sulfonates import. Responsible for energy coupling to the transport system. This is Aliphatic sulfonates import ATP-binding protein SsuB from Escherichia coli O6:K15:H31 (strain 536 / UPEC).